Here is a 494-residue protein sequence, read N- to C-terminus: Cobyric acid synthase (494 aa).

Residues 249–443 (EINVTILRLP…LHGIFDNGAW (195 aa)) enclose the GATase cobBQ-type domain. Catalysis depends on C330, which acts as the Nucleophile. The active site involves H435.

It belongs to the CobB/CobQ family. CobQ subfamily.

It participates in cofactor biosynthesis; adenosylcobalamin biosynthesis. Its function is as follows. Catalyzes amidations at positions B, D, E, and G on adenosylcobyrinic A,C-diamide. NH(2) groups are provided by glutamine, and one molecule of ATP is hydrogenolyzed for each amidation. The sequence is that of Cobyric acid synthase from Crocosphaera subtropica (strain ATCC 51142 / BH68) (Cyanothece sp. (strain ATCC 51142)).